A 295-amino-acid chain; its full sequence is MKIAILSRNSKLYSTRRLIEAGRKRGHTVRILDPLRCYMRIAADGFSLHYKGKPITGFDAVIPRIGASVTRYGTAVLRQLEFMGTYTPNPSDAILRARDKLRAHQLLAAQGIDMPVTVFGDNPDDTQDLLSMLGPPPHVVKLNEGAQGAGVILTEKASASRSVVEALRGLYANFIVQEFIGEAEGADLRCFVVGDRVVAAMRRQAAEGDFRSNLHLGGTAVVADATELEREVAVRSARALGLAVAGVDLIRSKRGPLVLEVNSTPGLEGVEGVCGVDVAGAIVQHLEQSVRRSAD.

The region spanning 104–287 (HQLLAAQGID…VAGAIVQHLE (184 aa)) is the ATP-grasp domain. ATP-binding positions include Lys141, 178 to 179 (EF), Asp187, and 211 to 213 (RSN). Mg(2+) is bound by residues Asp248, Glu260, and Asn262. The Mn(2+) site is built by Asp248, Glu260, and Asn262.

It belongs to the RimK family. Mg(2+) serves as cofactor. The cofactor is Mn(2+).

This is Probable alpha-L-glutamate ligase from Xanthomonas oryzae pv. oryzae (strain MAFF 311018).